We begin with the raw amino-acid sequence, 1454 residues long: E3 ubiquitin-protein ligase substrate receptor MMS22 (1454 aa).

The interval 159-178 is disordered; the sequence is NSSVQSQRYDSDEEIPKKRH. Positions 1201–1454 are required for interaction with MMS1; the sequence is YDEGDISRNF…SEPFKTFKNT (254 aa).

Belongs to the MMS22 family. Component of a cullin-RING ligase (CRL) composed of 4 subunits: the RING protein HRT1, the cullin RTT101, a linker protein MMS1, and the substrate receptor MMS22. This complex further interacts with RTT107 and CTF4 to form RTT101-MMS1-MMS22-RTT107 and RTT101-MMS1-MMS22-CTF4 complexes respectively. Interacts (via C-ter) with MMS1 (via N-ter). Interacts with RTT107.

The protein resides in the nucleus. In terms of biological role, substrate targeting component of a cullin-RING-based E3 ubiquitin-protein ligase complex RTT101(MMS1-MMS22). RTT101(MMS1-MMS22) promotes fork progression through damaged DNA or natural pause sites by stabilizing replication proteins like the replication fork-pausing complex (FPC) and leading-strand polymerase at stalled replication forks. RTT101(MMS1-MMS22) ubiquitinates the acetylated histones H3K56ac-H4 at lysine residues H3K121, H3K122 and H3K125. Ubiquitination is required for efficient histone deposition during replication-coupled nucleosome assembly, probably by facilitating the transfer of H3-H4 from ASF1 to other chaperones involved in histone deposition. This Saccharomyces cerevisiae (strain ATCC 204508 / S288c) (Baker's yeast) protein is E3 ubiquitin-protein ligase substrate receptor MMS22 (MMS22).